Here is a 614-residue protein sequence, read N- to C-terminus: DBH-like monooxygenase protein 1 (614 aa).

The first 22 residues, 1-22 (MRPLRPWALLLGALLGAAAAAA), serve as a signal peptide directing secretion. The Lumenal portion of the chain corresponds to 23 to 592 (RRYPHVAVLD…SSSCLPCSLS (570 aa)). One can recognise a DOMON domain in the interval 35-148 (AAYRLLWGRR…STVRVIWAYH (114 aa)). An N-linked (GlcNAc...) asparagine glycan is attached at Asn114. Tyr203 is an active-site residue. 2 disulfide bridges follow: Cys205/Cys257 and Cys242/Cys269. His235 and His236 together coordinate Cu cation. The N-linked (GlcNAc...) asparagine glycan is linked to Asn247. Cu cation-binding residues include His307, His389, His391, and Met464. Disulfide bonds link Cys364-Cys480, Cys368-Cys550, and Cys443-Cys465. Residue His389 is part of the active site. 2 N-linked (GlcNAc...) asparagine glycosylation sites follow: Asn476 and Asn517. Residues 593–613 (LTLLFVVYVASSTIGNFGPVV) form a helical membrane-spanning segment.

It belongs to the copper type II ascorbate-dependent monooxygenase family. It depends on Cu(2+) as a cofactor.

The protein localises to the endoplasmic reticulum membrane. This is DBH-like monooxygenase protein 1 (MOXD1) from Gallus gallus (Chicken).